Here is a 446-residue protein sequence, read N- to C-terminus: Phosphoglucosamine mutase (446 aa).

S102 (phosphoserine intermediate) is an active-site residue. The Mg(2+) site is built by S102, D241, D243, and D245. A Phosphoserine modification is found at S102.

It belongs to the phosphohexose mutase family. The cofactor is Mg(2+). Activated by phosphorylation.

It catalyses the reaction alpha-D-glucosamine 1-phosphate = D-glucosamine 6-phosphate. In terms of biological role, catalyzes the conversion of glucosamine-6-phosphate to glucosamine-1-phosphate. This Xylella fastidiosa (strain M23) protein is Phosphoglucosamine mutase.